The chain runs to 102 residues: Small ribosomal subunit protein uS10 (102 aa).

Belongs to the universal ribosomal protein uS10 family. As to quaternary structure, part of the 30S ribosomal subunit.

In terms of biological role, involved in the binding of tRNA to the ribosomes. The sequence is that of Small ribosomal subunit protein uS10 from Mesorhizobium japonicum (strain LMG 29417 / CECT 9101 / MAFF 303099) (Mesorhizobium loti (strain MAFF 303099)).